The sequence spans 926 residues: Neurofilament medium polypeptide (926 aa).

The segment covering 1-10 (MSYTLDSLGN) has biased composition (polar residues). Disordered regions lie at residues 1–51 (MSYT…VSSS) and 79–102 (QSSS…SNEK). Residue Ser2 is modified to N-acetylserine. The head stretch occupies residues 2-104 (SYTLDSLGNP…KLSRSNEKEQ (103 aa)). Low complexity predominate over residues 21-44 (RSSFSRISGSPSSGFRSQSWSRGS). Ser30 is subject to Phosphoserine. Arg42 bears the Omega-N-methylarginine mark. The O-linked (GlcNAc) threonine glycan is linked to Thr47. Ser99 bears the Phosphoserine mark. In terms of domain architecture, IF rod spans 101–412 (EKEQIQGLND…KLLEGEETRF (312 aa)). A coil 1A region spans residues 105–136 (IQGLNDRFAGYIEKVHYLEQQNKEIEAEIQAL). The interval 137-149 (RQKQASHAQLGDA) is linker 1. The segment at 150–248 (YDQEIRELRA…EEEVADLLAQ (99 aa)) is coil 1B. Ser226 carries the phosphoserine modification. Residues 249–265 (IQASHITVERKDYLKTD) are linker 12. The coil 2A stretch occupies residues 266-287 (ISTALKEIRSQLESHSDQNMHQ). Positions 288 to 291 (AEEW) are linker 2. The segment at 292–412 (FKCRYAKLTE…KLLEGEETRF (121 aa)) is coil 2B. The residue at position 320 (Tyr320) is a Phosphotyrosine. 5 positions are modified to phosphoserine: Ser346, Ser418, Ser430, Ser468, and Ser484. The tract at residues 413-926 (STFAGSITGP…AIVKEVTQSD (514 aa)) is tail. Residues 487 to 860 (EEVKEEEAEE…EKKGGDKSEE (374 aa)) form a disordered region. Over residues 490-507 (KEEEAEEKEEKEEAEEEV) the composition is skewed to acidic residues. Repeat unit 1 spans residues 512-516 (KSPVK). The 17 X 5 AA approximate tandem repeats of K-S-P-[TVEA]-[AKETP] stretch occupies residues 512–698 (KSPVKATAPE…KSPAPKSPVE (187 aa)). A Phosphoserine modification is found at Ser513. Positions 523-543 (KEEEGEKEEEEGQEEEEEEEE) are enriched in acidic residues. The span at 544–563 (AAKSDQAEEGGSEKEGSSEK) shows a compositional bias: basic and acidic residues. Residues Ser547, Ser555, Ser560, and Ser561 each carry the phosphoserine modification. Over residues 564–584 (EEGEQEEEGETEAEGEGEEAA) the composition is skewed to acidic residues. Phosphothreonine is present on Thr574. Residues 585-619 (AEAKEEKKMEEKAEEVAPKEELAAEAKVEKPEKAK) show a composition bias toward basic and acidic residues. 16 tandem repeats follow at residues 619–623 (KSPVA), 624–628 (KSPTT), 629–633 (KSPTA), 634–638 (KSPEA), 639–643 (KSPEA), 644–648 (KSPTA), 649–653 (KSPTA), 654–658 (KSPVA), 659–663 (KSPTA), 664–668 (KSPEA), 669–673 (KSPEA), 674–678 (KSPTA), 679–683 (KSPTA), 684–688 (KSPAA), 689–693 (KSPAP), and 694–698 (KSPVE). At Thr628 the chain carries Phosphothreonine. Ser630, Ser635, and Ser640 each carry phosphoserine. Thr647 carries the post-translational modification Phosphothreonine. Ser650 and Ser655 each carry phosphoserine. A phosphoserine mark is found at Ser665 and Ser670. A compositionally biased stretch (low complexity) spans 673–692 (AKSPTAKSPTAKSPAAKSPA). Thr677 bears the Phosphothreonine mark. Residues Ser680, Ser685, Ser690, Ser695, Ser727, Ser751, Ser757, Ser771, Ser831, and Ser847 each carry the phosphoserine modification. 3 stretches are compositionally biased toward basic and acidic residues: residues 696–764 (PVEE…EEVP), 771–811 (SPEK…KEDI), and 826–838 (TKEK…EEKG). Positions 849-860 (GDEKKGGDKSEE) are enriched in basic and acidic residues.

As to quaternary structure, forms heterodimers with NEFL; which can further hetero-oligomerize (in vitro). Forms heterodimers with INA (in vitro). Phosphorylated on a number of serine residues in the repeated K-S-P tripeptide motif. Phosphorylation of NFH may result in the formation of interfilament cross-links that are important in the maintenance of axonal caliber. Post-translationally, phosphorylation seems to play a major role in the functioning of the larger neurofilament polypeptides (NF-M and NF-H), the levels of phosphorylation being altered developmentally and coincidentally with a change in the neurofilament function. In terms of processing, phosphorylated in the head and rod regions by the PKC kinase PKN1, leading to the inhibition of polymerization.

It is found in the cytoplasm. The protein resides in the cytoskeleton. Its subcellular location is the cell projection. The protein localises to the axon. Neurofilaments usually contain three intermediate filament proteins: NEFL, NEFM, and NEFH which are involved in the maintenance of neuronal caliber. May additionally cooperate with the neuronal intermediate filament proteins PRPH and INA to form neuronal filamentous networks. This chain is Neurofilament medium polypeptide (NEFM), found in Bos taurus (Bovine).